The chain runs to 119 residues: Large ribosomal subunit protein uL18 (119 aa).

Belongs to the universal ribosomal protein uL18 family. As to quaternary structure, part of the 50S ribosomal subunit; part of the 5S rRNA/L5/L18/L25 subcomplex. Contacts the 5S and 23S rRNAs.

Functionally, this is one of the proteins that bind and probably mediate the attachment of the 5S RNA into the large ribosomal subunit, where it forms part of the central protuberance. The polypeptide is Large ribosomal subunit protein uL18 (Chlorobium luteolum (strain DSM 273 / BCRC 81028 / 2530) (Pelodictyon luteolum)).